The sequence spans 111 residues: Iron-sulfur cluster assembly protein CyaY (111 aa).

Belongs to the frataxin family.

Functionally, involved in iron-sulfur (Fe-S) cluster assembly. May act as a regulator of Fe-S biogenesis. This Cupriavidus taiwanensis (strain DSM 17343 / BCRC 17206 / CCUG 44338 / CIP 107171 / LMG 19424 / R1) (Ralstonia taiwanensis (strain LMG 19424)) protein is Iron-sulfur cluster assembly protein CyaY.